A 184-amino-acid polypeptide reads, in one-letter code: NADH-quinone oxidoreductase subunit B (184 aa).

[4Fe-4S] cluster contacts are provided by C37, C38, C103, and C132.

Belongs to the complex I 20 kDa subunit family. In terms of assembly, NDH-1 is composed of 14 different subunits. Subunits NuoB, C, D, E, F, and G constitute the peripheral sector of the complex. It depends on [4Fe-4S] cluster as a cofactor.

The protein localises to the cell membrane. The catalysed reaction is a quinone + NADH + 5 H(+)(in) = a quinol + NAD(+) + 4 H(+)(out). Its function is as follows. NDH-1 shuttles electrons from NADH, via FMN and iron-sulfur (Fe-S) centers, to quinones in the respiratory chain. The immediate electron acceptor for the enzyme in this species is believed to be a menaquinone. Couples the redox reaction to proton translocation (for every two electrons transferred, four hydrogen ions are translocated across the cytoplasmic membrane), and thus conserves the redox energy in a proton gradient. The sequence is that of NADH-quinone oxidoreductase subunit B from Rhodococcus erythropolis (strain PR4 / NBRC 100887).